The primary structure comprises 318 residues: Pyrimidine-specific ribonucleoside hydrolase RihA (318 aa).

H240 is an active-site residue.

This sequence belongs to the IUNH family. RihA subfamily.

Functionally, hydrolyzes cytidine or uridine to ribose and cytosine or uracil, respectively. The polypeptide is Pyrimidine-specific ribonucleoside hydrolase RihA (Shewanella baltica (strain OS155 / ATCC BAA-1091)).